The primary structure comprises 185 residues: Adenylyl-sulfate kinase (185 aa).

G13–S20 lines the ATP pocket. S86 functions as the Phosphoserine intermediate in the catalytic mechanism.

This sequence belongs to the APS kinase family.

It catalyses the reaction adenosine 5'-phosphosulfate + ATP = 3'-phosphoadenylyl sulfate + ADP + H(+). It functions in the pathway sulfur metabolism; hydrogen sulfide biosynthesis; sulfite from sulfate: step 2/3. Functionally, catalyzes the synthesis of activated sulfate. The protein is Adenylyl-sulfate kinase of Myxococcus xanthus (strain DK1622).